Reading from the N-terminus, the 498-residue chain is MRTIRAATEHLFGLGWKFWRLGICKAVVPLQAAWKAFSQPVPASCNELLTQLLLCVSLASLIAGLAHHWLVSLQLYPLGPPALVTSLCGLFVFLSLGLVPPIRCLFVLSVPTLGSKQGRRLLLSYSAANLAVAVVPNVLGNVRAAGQVLSCVTEGSLESLLNTTYQLRQAARELGPASRAGSRSLTFEVEGKGSAFRLHMHTITQEILEDFSGLEFLARAALGTQRVVTGLFLLGLLGESAWYLHRYLTDLRFDNIYATRQLVRQLAQAGATHLLTSPPPWLLQTAQPKLSREELLSCLLRLGLLALLLVATAVTVASDYGAFLLAQAAVAWAQKLPTVPITLTVKYDASYKVLDFILFVLNQPPVESVFASMQRSFQWELRFTPHDCHLPQAQPPRVTAALAAGALQLLAGATLVLQAYAWRLRHTIAASFFPDQEARRLSHLQARLQRRHNQSDHLNKQPGTMATRESRKPGQGTRTLESQGPQAHDSLGPPYDLE.

Over 1–51 (MRTIRAATEHLFGLGWKFWRLGICKAVVPLQAAWKAFSQPVPASCNELLTQ) the chain is Cytoplasmic. Residues 52–72 (LLLCVSLASLIAGLAHHWLVS) form a helical membrane-spanning segment. The Extracellular portion of the chain corresponds to 73–81 (LQLYPLGPP). A helical membrane pass occupies residues 82–102 (ALVTSLCGLFVFLSLGLVPPI). Residues 103-121 (RCLFVLSVPTLGSKQGRRL) lie on the Cytoplasmic side of the membrane. A helical membrane pass occupies residues 122–142 (LLSYSAANLAVAVVPNVLGNV). At 143–226 (RAAGQVLSCV…LARAALGTQR (84 aa)) the chain is on the extracellular side. Residues 227–247 (VVTGLFLLGLLGESAWYLHRY) form a helical membrane-spanning segment. At 248-303 (LTDLRFDNIYATRQLVRQLAQAGATHLLTSPPPWLLQTAQPKLSREELLSCLLRLG) the chain is on the cytoplasmic side. Residues 304 to 324 (LLALLLVATAVTVASDYGAFL) form a helical membrane-spanning segment. Residues 325 to 401 (LAQAAVAWAQ…QAQPPRVTAA (77 aa)) lie on the Extracellular side of the membrane. A helical membrane pass occupies residues 402 to 422 (LAAGALQLLAGATLVLQAYAW). The Cytoplasmic portion of the chain corresponds to 423–498 (RLRHTIAASF…DSLGPPYDLE (76 aa)). The interval 449 to 498 (QRRHNQSDHLNKQPGTMATRESRKPGQGTRTLESQGPQAHDSLGPPYDLE) is disordered. The span at 476–485 (GTRTLESQGP) shows a compositional bias: polar residues.

In terms of tissue distribution, expressed in osteoclast (at protein level). Ubiquitous. Highly expressed in multi-nuclear osteoclast cells compared to mono-nuclear macrophages. Expressed in foreign body giant cells (FBGCs).

The protein localises to the membrane. In terms of biological role, probable cell surface receptor that plays a role in cellular fusion and cell differentiation. Cooperates with DCSTAMP in modulating cell-cell fusion in both osteoclasts and foreign body giant cells (FBGCs). Involved in osteoclast bone resorption. Promotes osteoclast differentiation and may play a role in the multinucleated osteoclast maturation. This is Osteoclast stimulatory transmembrane protein (Ocstamp) from Mus musculus (Mouse).